The sequence spans 132 residues: Small ribosomal subunit protein uS9 (132 aa).

It belongs to the universal ribosomal protein uS9 family.

The sequence is that of Small ribosomal subunit protein uS9 from Mesomycoplasma hyopneumoniae (strain 232) (Mycoplasma hyopneumoniae).